The chain runs to 272 residues: Acyl-[acyl-carrier-protein]--UDP-N-acetylglucosamine O-acyltransferase (272 aa).

This sequence belongs to the transferase hexapeptide repeat family. LpxA subfamily. As to quaternary structure, homotrimer.

The protein resides in the cytoplasm. The catalysed reaction is a (3R)-hydroxyacyl-[ACP] + UDP-N-acetyl-alpha-D-glucosamine = a UDP-3-O-[(3R)-3-hydroxyacyl]-N-acetyl-alpha-D-glucosamine + holo-[ACP]. The protein operates within glycolipid biosynthesis; lipid IV(A) biosynthesis; lipid IV(A) from (3R)-3-hydroxytetradecanoyl-[acyl-carrier-protein] and UDP-N-acetyl-alpha-D-glucosamine: step 1/6. Functionally, involved in the biosynthesis of lipid A, a phosphorylated glycolipid that anchors the lipopolysaccharide to the outer membrane of the cell. This chain is Acyl-[acyl-carrier-protein]--UDP-N-acetylglucosamine O-acyltransferase, found in Rhizobium johnstonii (strain DSM 114642 / LMG 32736 / 3841) (Rhizobium leguminosarum bv. viciae).